The primary structure comprises 457 residues: Bifunctional protein GlmU (457 aa).

A pyrophosphorylase region spans residues 1–228 (MEELVSVILA…SEEIIGVNSR (228 aa)). Residues 9 to 12 (LAAG), K23, Q73, and 78 to 79 (GT) contribute to the UDP-N-acetyl-alpha-D-glucosamine site. D102 lines the Mg(2+) pocket. 4 residues coordinate UDP-N-acetyl-alpha-D-glucosamine: G139, E154, N169, and N226. N226 is a Mg(2+) binding site. The linker stretch occupies residues 229 to 249 (VQLSNAEKVMRRRINEKHMEN). The N-acetyltransferase stretch occupies residues 250 to 457 (GVTIIDPDST…VEERIKKGRL (208 aa)). UDP-N-acetyl-alpha-D-glucosamine is bound by residues R331 and K349. H361 functions as the Proton acceptor in the catalytic mechanism. Positions 364 and 375 each coordinate UDP-N-acetyl-alpha-D-glucosamine. Residues 384-385 (NY), A421, and R438 contribute to the acetyl-CoA site.

The protein in the N-terminal section; belongs to the N-acetylglucosamine-1-phosphate uridyltransferase family. This sequence in the C-terminal section; belongs to the transferase hexapeptide repeat family. As to quaternary structure, homotrimer. It depends on Mg(2+) as a cofactor.

The protein localises to the cytoplasm. The enzyme catalyses alpha-D-glucosamine 1-phosphate + acetyl-CoA = N-acetyl-alpha-D-glucosamine 1-phosphate + CoA + H(+). It carries out the reaction N-acetyl-alpha-D-glucosamine 1-phosphate + UTP + H(+) = UDP-N-acetyl-alpha-D-glucosamine + diphosphate. It functions in the pathway nucleotide-sugar biosynthesis; UDP-N-acetyl-alpha-D-glucosamine biosynthesis; N-acetyl-alpha-D-glucosamine 1-phosphate from alpha-D-glucosamine 6-phosphate (route II): step 2/2. It participates in nucleotide-sugar biosynthesis; UDP-N-acetyl-alpha-D-glucosamine biosynthesis; UDP-N-acetyl-alpha-D-glucosamine from N-acetyl-alpha-D-glucosamine 1-phosphate: step 1/1. Its pathway is bacterial outer membrane biogenesis; LPS lipid A biosynthesis. Functionally, catalyzes the last two sequential reactions in the de novo biosynthetic pathway for UDP-N-acetylglucosamine (UDP-GlcNAc). The C-terminal domain catalyzes the transfer of acetyl group from acetyl coenzyme A to glucosamine-1-phosphate (GlcN-1-P) to produce N-acetylglucosamine-1-phosphate (GlcNAc-1-P), which is converted into UDP-GlcNAc by the transfer of uridine 5-monophosphate (from uridine 5-triphosphate), a reaction catalyzed by the N-terminal domain. The chain is Bifunctional protein GlmU from Caldanaerobacter subterraneus subsp. tengcongensis (strain DSM 15242 / JCM 11007 / NBRC 100824 / MB4) (Thermoanaerobacter tengcongensis).